Reading from the N-terminus, the 380-residue chain is Cytochrome b (380 aa).

The next 4 membrane-spanning stretches (helical) occupy residues 34–54 (FGSLLALCLVTQILTGLLLAM), 78–99 (WLIRNMHANGASFFFICIYMHI), 114–134 (WNTGVLLLLTLMATAFVGYVL), and 179–199 (FFALHFLLPFMIAGLTLIHLT). 2 residues coordinate heme b: His-84 and His-98. Residues His-183 and His-197 each contribute to the heme b site. Residue His-202 coordinates a ubiquinone. 4 helical membrane-spanning segments follow: residues 227-247 (LKDILGLALLLLPLTAMALFS), 289-309 (LGGVLALAASVLVLLLCPFLH), 321-341 (LSQSLFWILVANLLILTWIGS), and 348-368 (FIIIGQLASTTYFIILLILFP).

This sequence belongs to the cytochrome b family. In terms of assembly, the cytochrome bc1 complex contains 11 subunits: 3 respiratory subunits (MT-CYB, CYC1 and UQCRFS1), 2 core proteins (UQCRC1 and UQCRC2) and 6 low-molecular weight proteins (UQCRH/QCR6, UQCRB/QCR7, UQCRQ/QCR8, UQCR10/QCR9, UQCR11/QCR10 and a cleavage product of UQCRFS1). This cytochrome bc1 complex then forms a dimer. Requires heme b as cofactor.

It localises to the mitochondrion inner membrane. Component of the ubiquinol-cytochrome c reductase complex (complex III or cytochrome b-c1 complex) that is part of the mitochondrial respiratory chain. The b-c1 complex mediates electron transfer from ubiquinol to cytochrome c. Contributes to the generation of a proton gradient across the mitochondrial membrane that is then used for ATP synthesis. This Oceanodroma tristrami (Tristram's storm-petrel) protein is Cytochrome b (MT-CYB).